The chain runs to 1296 residues: DNA-directed RNA polymerase subunit beta' (1296 aa).

Zn(2+) contacts are provided by Cys60, Cys62, Cys75, and Cys78. Positions 535, 537, and 539 each coordinate Mg(2+). Residues Cys877, Cys954, Cys961, and Cys964 each coordinate Zn(2+).

This sequence belongs to the RNA polymerase beta' chain family. The RNAP catalytic core consists of 2 alpha, 1 beta, 1 beta' and 1 omega subunit. When a sigma factor is associated with the core the holoenzyme is formed, which can initiate transcription. The cofactor is Mg(2+). Zn(2+) serves as cofactor.

The catalysed reaction is RNA(n) + a ribonucleoside 5'-triphosphate = RNA(n+1) + diphosphate. In terms of biological role, DNA-dependent RNA polymerase catalyzes the transcription of DNA into RNA using the four ribonucleoside triphosphates as substrates. The chain is DNA-directed RNA polymerase subunit beta' from Beutenbergia cavernae (strain ATCC BAA-8 / DSM 12333 / CCUG 43141 / JCM 11478 / NBRC 16432 / NCIMB 13614 / HKI 0122).